Consider the following 113-residue polypeptide: Hydrogenase maturation factor HypA (113 aa).

His-2 is a binding site for Ni(2+). Residues Cys-70, Cys-73, Cys-86, and Cys-88 each contribute to the Zn(2+) site.

The protein belongs to the HypA/HybF family.

Functionally, involved in the maturation of [NiFe] hydrogenases. Required for nickel insertion into the metal center of the hydrogenase. The polypeptide is Hydrogenase maturation factor HypA (Trichormus variabilis (strain ATCC 29413 / PCC 7937) (Anabaena variabilis)).